Consider the following 400-residue polypeptide: MSKTIAINAGSSSLKWQLYQMPEEKVLAQGIIERIGLTDSISTVKYDGKKEEHILDIPDHTEAVKRLLNDLIHFGIIDTYDEITGVGHRIVAGGEYFKESVVVDDKVVEQVEELAALAPLHNPGAAAGIRAFRKILPDITSVCVFDTSFHTTMQKHTYLYPIPQKYYTDYKVRKYGAHGTSHKYVAEEAAKMLGRPLDELKLITAHVGNGVSITANYHGQSVDTSMGFTPLAGPMMGTRSGDIDPAIIPYLIAQDPELKDAADVVNMLNKQSGLGGVSGISSDMRDIEAGLQANNPDAVLAYNIFIDRIKKFIGQYFAVLNGADALVFTAGMGENAPLMRQDVVNGLSWFGMEIDPEKNVFGYRGDISTAASKVKVLVISTDEELCIARDVERLKKTVSS.

Mg(2+) is bound at residue asparagine 8. Residue lysine 15 participates in ATP binding. Residue arginine 89 coordinates substrate. The Proton donor/acceptor role is filled by aspartate 146. ATP is bound by residues histidine 206–glycine 210, aspartate 283–arginine 285, and glycine 331–asparagine 335. Residue glutamate 383 participates in Mg(2+) binding.

Belongs to the acetokinase family. In terms of assembly, homodimer. Requires Mg(2+) as cofactor. Mn(2+) serves as cofactor.

The protein resides in the cytoplasm. It carries out the reaction acetate + ATP = acetyl phosphate + ADP. The protein operates within metabolic intermediate biosynthesis; acetyl-CoA biosynthesis; acetyl-CoA from acetate: step 1/2. In terms of biological role, catalyzes the formation of acetyl phosphate from acetate and ATP. Can also catalyze the reverse reaction. The chain is Acetate kinase from Streptococcus equi subsp. zooepidemicus (strain MGCS10565).